Reading from the N-terminus, the 95-residue chain is Probable FAD-linked sulfhydryl oxidase OPG072 (95 aa).

Topologically, residues 1–8 (MNPKHWGR) are intravirion. In terms of domain architecture, ERV/ALR sulfhydryl oxidase spans 1–95 (MNPKHWGRAV…AIDVTKVNPL (95 aa)). A helical membrane pass occupies residues 9–25 (AVWTIIFIVLSQAGLDG). Over 26-95 (NIEACKRKLY…AIDVTKVNPL (70 aa)) the chain is Virion surface. A disulfide bond links Cys43 and Cys46.

The protein belongs to the orthopoxvirus OPG072 family. Interacts with OPG128/A2.5; this interaction involves formation of a transient disulfide-bonded intermediate, allowing disulfide bond transfer. The cofactor is FAD.

The protein resides in the virion membrane. It is found in the host cytoplasm. The catalysed reaction is 2 R'C(R)SH + O2 = R'C(R)S-S(R)CR' + H2O2. FAD-dependent sulfhydryl oxidase that catalyzes disulfide bond formation. The complete pathway for formation of disulfide bonds in intracellular virion membrane proteins sequentially involves thiol-disulfide transfer between OPG072/E10, OPG128/A2.5 and OPG088/G4. This chain is Probable FAD-linked sulfhydryl oxidase OPG072 (OPG072), found in Bos taurus (Bovine).